We begin with the raw amino-acid sequence, 325 residues long: Reaction center protein M chain (325 aa).

Transmembrane regions (helical) follow at residues 54–80 (LGPLGILSIVFGSLAIMIIGFNMLASV), 111–140 (NDGGWWLMAGLFLTISILLWWVRMYTRARA), and 143–168 (MGTHVAWAFAAAIWLYLVLGFIRPVL). Positions 183 and 203 each coordinate (7R,8Z)-bacteriochlorophyll b. Residues 198 to 226 (FYNPFHALSIAFLYGATLLFAMHGATILA) traverse the membrane as a helical segment. Fe cation contacts are provided by histidine 220 and glutamate 235. Tryptophan 253 is a binding site for a ubiquinone. The chain crosses the membrane as a helical span at residues 260-286 (NATTESIHRWAWWFAVLCPLCGGIGIL). Histidine 267 lines the Fe cation pocket.

Belongs to the reaction center PufL/M/PsbA/D family. As to quaternary structure, reaction center is composed of four bacteriochlorophylls, two bacteriopheophytins, two ubiquinones, one iron, and three highly hydrophobic polypeptide chains (designated L, M, and H).

It is found in the cell inner membrane. Its function is as follows. The reaction center is a membrane-bound complex that mediates the initial photochemical event in the electron transfer process of photosynthesis. The sequence is that of Reaction center protein M chain (pufM) from Rubrivivax gelatinosus (strain NBRC 100245 / IL144).